The following is a 196-amino-acid chain: Small ribosomal subunit protein uS4c (196 aa).

The tract at residues 17-36 (ALPGLTRKTPKSGSNLKKKF) is disordered. Residues 89 to 157 (MRLDNILFRL…VQNYIASSDP (69 aa)) form the S4 RNA-binding domain.

The protein belongs to the universal ribosomal protein uS4 family. Part of the 30S ribosomal subunit. Contacts protein S5. The interaction surface between S4 and S5 is involved in control of translational fidelity.

The protein localises to the plastid. It localises to the chloroplast. Functionally, one of the primary rRNA binding proteins, it binds directly to 16S rRNA where it nucleates assembly of the body of the 30S subunit. Its function is as follows. With S5 and S12 plays an important role in translational accuracy. This chain is Small ribosomal subunit protein uS4c (rps4), found in Calamagrostis epigeios (Wood small-reed grass).